The sequence spans 100 residues: Aspartyl/glutamyl-tRNA(Asn/Gln) amidotransferase subunit C (100 aa).

Belongs to the GatC family. In terms of assembly, heterotrimer of A, B and C subunits.

The enzyme catalyses L-glutamyl-tRNA(Gln) + L-glutamine + ATP + H2O = L-glutaminyl-tRNA(Gln) + L-glutamate + ADP + phosphate + H(+). It carries out the reaction L-aspartyl-tRNA(Asn) + L-glutamine + ATP + H2O = L-asparaginyl-tRNA(Asn) + L-glutamate + ADP + phosphate + 2 H(+). Its function is as follows. Allows the formation of correctly charged Asn-tRNA(Asn) or Gln-tRNA(Gln) through the transamidation of misacylated Asp-tRNA(Asn) or Glu-tRNA(Gln) in organisms which lack either or both of asparaginyl-tRNA or glutaminyl-tRNA synthetases. The reaction takes place in the presence of glutamine and ATP through an activated phospho-Asp-tRNA(Asn) or phospho-Glu-tRNA(Gln). This chain is Aspartyl/glutamyl-tRNA(Asn/Gln) amidotransferase subunit C, found in Staphylococcus epidermidis (strain ATCC 35984 / DSM 28319 / BCRC 17069 / CCUG 31568 / BM 3577 / RP62A).